Here is a 229-residue protein sequence, read N- to C-terminus: Large ribosomal subunit protein uL1 (229 aa).

Belongs to the universal ribosomal protein uL1 family. Part of the 50S ribosomal subunit.

Functionally, binds directly to 23S rRNA. The L1 stalk is quite mobile in the ribosome, and is involved in E site tRNA release. In terms of biological role, protein L1 is also a translational repressor protein, it controls the translation of the L11 operon by binding to its mRNA. The polypeptide is Large ribosomal subunit protein uL1 (Clostridium kluyveri (strain ATCC 8527 / DSM 555 / NBRC 12016 / NCIMB 10680 / K1)).